We begin with the raw amino-acid sequence, 159 residues long: Probable deoxyuridine 5'-triphosphate nucleotidohydrolase (159 aa).

This sequence belongs to the dCTP deaminase family. Archaeal dUTPase subfamily.

The catalysed reaction is dUTP + H2O = dUMP + diphosphate + H(+). It functions in the pathway pyrimidine metabolism; dUMP biosynthesis; dUMP from dCTP (dUTP route): step 2/2. In terms of biological role, this enzyme is involved in nucleotide metabolism: it produces dUMP, the immediate precursor of thymidine nucleotides and it decreases the intracellular concentration of dUTP so that uracil cannot be incorporated into DNA. The polypeptide is Probable deoxyuridine 5'-triphosphate nucleotidohydrolase (Aeropyrum pernix (strain ATCC 700893 / DSM 11879 / JCM 9820 / NBRC 100138 / K1)).